Consider the following 558-residue polypeptide: Two-component response regulator-like APRR5 (558 aa).

The Response regulatory domain maps to 51–169 (RVLLVEADDS…ELRNLWQHVW (119 aa)). A disordered region spans residues 180-233 (FPWNESVGQQKAEGASANNSNGKRDDHVVSGNGGDAQSSCTRPEMEGESADVEV). A coiled-coil region spans residues 240-260 (QMECAKSQFNETRLLANELQS). Disordered stretches follow at residues 297-319 (SLRR…HPSS) and 535-558 (KKLA…TQAP). Polar residues predominate over residues 303–319 (ASENQSSGDRPSLHPSS). A CCT domain is found at 509–551 (REAALTKFRMKRKDRCYEKKVRYESRKKLAEQRPRIKGQFVRQ).

This sequence belongs to the ARR-like family. As to quaternary structure, interacts with ADO1 and ADO2. Interacts with SPY (via N-terminus). Phosphorylation varies throughout the diurnal cycle and enhances ADO1 binding. In terms of processing, O-fucosylated by SPY. O-fucosylation promotes APRR5 proteolysis.

The protein localises to the nucleus. Its function is as follows. Transcriptional repressor of CCA1 and LHY, thereby controlling photoperiodic flowering response. Involved in the positive and negative feedback loops of the circadian clock. With RVE8, forms a negative feedback loop of the circadian clock. Expression of several members of the ARR-like family is controlled by circadian rhythm. Proteolytic substrate of the E3 ubiquitin ligase SCF(ADO1) complex. APRR9, APRR7, and APRR5 coordinately act on the upstream region of the target genes to repress their expression from noon until midnight. The particular coordinated sequential expression of APRR9, APRR7, APRR5, APRR3 and APPR1 result to circadian waves that may be at the basis of the endogenous circadian clock. Negative regulator of shade avoidance response. Involved in the inhibition of leaf expansion in shade avoidance response. This Arabidopsis thaliana (Mouse-ear cress) protein is Two-component response regulator-like APRR5 (APRR5).